The chain runs to 272 residues: R3H domain-containing protein 4 (272 aa).

The tract at residues 141 to 167 (LEDEGKSKARRRGPTRGEDRRREDPAY) is disordered. The span at 155-165 (TRGEDRRREDP) shows a compositional bias: basic and acidic residues. In terms of domain architecture, R3H spans 191-254 (METLETWEER…KRQMKVSNRH (64 aa)).

It is found in the nucleus. In Bos taurus (Bovine), this protein is R3H domain-containing protein 4 (R3HDM4).